A 322-amino-acid polypeptide reads, in one-letter code: MLTDYLQACERGLEPLFSPQILSAVMALSRQRLVERPHGDLPRWMAALDALPAGPTNCALDQNTLTIGRAGEQNEEAVKLALQGLIPWRKGPFEFFGVPVETEWRSDWKWQRVAPHLSSLQGRRILDVGCGSGYHCWRMAAAGASCVVGIDPTILFLVQYLAVRRFAPDLPVWFLPLRMEELPAEGGQFDTVFSMGVLYHRRSPLDHLLELKGALCAGGELVLETLVVEGDECTVLMPQDRYAMMRNVFFLPSVAMLSRWLERCGFVDVRCVDESNTSVQEQRSTDWMRFQSLPDFLDPEDHSLTREGYPAPRRAVLVARKP.

Carboxy-S-adenosyl-L-methionine is bound by residues Lys90, Trp104, Lys109, Gly129, 151-153 (DPT), 179-180 (ME), Met195, Tyr199, and Arg314.

It belongs to the class I-like SAM-binding methyltransferase superfamily. CmoB family. In terms of assembly, homotetramer.

The catalysed reaction is carboxy-S-adenosyl-L-methionine + 5-hydroxyuridine(34) in tRNA = 5-carboxymethoxyuridine(34) in tRNA + S-adenosyl-L-homocysteine + H(+). In terms of biological role, catalyzes carboxymethyl transfer from carboxy-S-adenosyl-L-methionine (Cx-SAM) to 5-hydroxyuridine (ho5U) to form 5-carboxymethoxyuridine (cmo5U) at position 34 in tRNAs. The polypeptide is tRNA U34 carboxymethyltransferase (Alcanivorax borkumensis (strain ATCC 700651 / DSM 11573 / NCIMB 13689 / SK2)).